The following is a 707-amino-acid chain: Anti-sigma-I factor RsgI9 (707 aa).

At 1 to 149 the chain is on the cytoplasmic side; it reads MKITGVIVRI…NFSRISNIKN (149 aa). A RsgI N-terminal anti-sigma domain is found at 3-50; the sequence is ITGVIVRIHKDRAIIRTDDNRLLAVKRHNDMMVGQIVSFDANEVHKVE. A helical membrane pass occupies residues 150–172; the sequence is FSRIASIAAAFVLIFLFGRNVML. The Extracellular segment spans residues 173–707; sequence NNSSDSEYAY…DSEEKKEYIQ (535 aa). Positions 256–283 form a coiled coil; sequence NDKNKKTRDKREEKIDELKETIEQGIEA. Residues 345 to 392 form a disordered region; sequence EDNTELAPTPTPVPPETPEPTPTPTASEATPSNSPVESKSPEAVPELG. Over residues 353–367 the composition is skewed to pro residues; it reads TPTPVPPETPEPTPT. Over residues 368–379 the composition is skewed to low complexity; sequence PTASEATPSNSP.

It localises to the cell membrane. In Acetivibrio thermocellus (strain ATCC 27405 / DSM 1237 / JCM 9322 / NBRC 103400 / NCIMB 10682 / NRRL B-4536 / VPI 7372) (Clostridium thermocellum), this protein is Anti-sigma-I factor RsgI9.